A 194-amino-acid polypeptide reads, in one-letter code: Imidazoleglycerol-phosphate dehydratase (194 aa).

It belongs to the imidazoleglycerol-phosphate dehydratase family.

The protein resides in the cytoplasm. The catalysed reaction is D-erythro-1-(imidazol-4-yl)glycerol 3-phosphate = 3-(imidazol-4-yl)-2-oxopropyl phosphate + H2O. The protein operates within amino-acid biosynthesis; L-histidine biosynthesis; L-histidine from 5-phospho-alpha-D-ribose 1-diphosphate: step 6/9. The protein is Imidazoleglycerol-phosphate dehydratase of Streptococcus gordonii (strain Challis / ATCC 35105 / BCRC 15272 / CH1 / DL1 / V288).